Reading from the N-terminus, the 764-residue chain is MTILSHILGFPRIGLHRELKRAQESYWDGHITQQQLLNTGRELRACHWQQQKQAGLNMLPVGDFAWYDHVLTTSLMLDNVPVRHRNDDGSSNIDTLYRIGRGNAPTGQPVVASEMTKWFNTNYHYIVPEFTVGQQFRLGWTQLIEEVDEALALGYNIKPILLGPISYLWLGKAKEKHFDRLSLLSALLPVYQQILALLAQRGIEWVQIDEPALVLELPTAWCNAYYDAYTDALQGYSKLLLTTYFDSIGHHLNIITNLSVHGLHVDLIAGNDDVEVLHRTLPSNWVLSAGVINGRNVWRADLPSKFKQLRSLVGQRELWVGSSCSLLHSPIDLSIETRMDPEVKSWFAFTIQKCNELKLLCNALNRLDDTKYQAILADYSAPLWARQTSEKVHNRQVKIRTEQITENHSQRQQHYLDRINVQRARFNLPILPTTTIGSFPQTTAIRSLRLDLKSGRIDNEYYKNAICNHIKQAITEQDALGLDVLVHGEAERNDMVEYFGEHLNGFIFTQNGWVQSYGSRCVKPPIIIGDISRPKPITVEWAWYAQSLTQKPVKGMLTGPVTILCWSFPREDLDRKTIARQIALALRDEVIDLENAGIGIIQIDEPALREGLPLKYSAWKEYLTWAVEAFRLNAAVAKNNTQIHTHMCYSEFNDIMDSIIAMDADVITIETSRSNMKLLDTFKQYQYPNDIGPGVYDIHSPNIPSEDDIIQLLRKAAQVIPIKRLWVNPDCGLKTRTWLETRKALSNMVNAAHKLRREEEYNRS.

Residues 17–20 and Lys117 contribute to the 5-methyltetrahydropteroyltri-L-glutamate site; that span reads RELK. L-homocysteine-binding positions include 436–438 and Glu489; that span reads IGS. Residues 436–438 and Glu489 contribute to the L-methionine site; that span reads IGS. Residues 520–521 and Trp566 contribute to the 5-methyltetrahydropteroyltri-L-glutamate site; that span reads RC. An L-homocysteine-binding site is contributed by Asp604. An L-methionine-binding site is contributed by Asp604. Glu610 is a binding site for 5-methyltetrahydropteroyltri-L-glutamate. His646, Cys648, and Glu670 together coordinate Zn(2+). Residue His699 is the Proton donor of the active site. Zn(2+) is bound at residue Cys731.

It belongs to the vitamin-B12 independent methionine synthase family. Zn(2+) serves as cofactor.

It catalyses the reaction 5-methyltetrahydropteroyltri-L-glutamate + L-homocysteine = tetrahydropteroyltri-L-glutamate + L-methionine. It participates in amino-acid biosynthesis; L-methionine biosynthesis via de novo pathway; L-methionine from L-homocysteine (MetE route): step 1/1. In terms of biological role, catalyzes the transfer of a methyl group from 5-methyltetrahydrofolate to homocysteine resulting in methionine formation. The protein is 5-methyltetrahydropteroyltriglutamate--homocysteine methyltransferase of Baumannia cicadellinicola subsp. Homalodisca coagulata.